Here is a 360-residue protein sequence, read N- to C-terminus: Photosystem II protein D1 (360 aa).

The next 3 membrane-spanning stretches (helical) occupy residues 32–49, 121–136, and 145–159; these read YLGW…SATF, HFFI…EWEL, and WIFV…AASA. Residue H121 coordinates chlorophyll a. Y129 serves as a coordination point for pheophytin a. The [CaMn4O5] cluster site is built by D173 and E192. The helical transmembrane segment at 200–221 threads the bilayer; it reads LHMFGVAAVFGGSLFSAMHGSL. A chlorophyll a-binding site is contributed by H201. Residues H218 and 267 to 268 contribute to the a quinone site; that span reads SF. H218 contributes to the Fe cation binding site. Position 275 (H275) interacts with Fe cation. The chain crosses the membrane as a helical span at residues 277-291; that stretch reads FLGAWPVVGIWLTAM. Residues H335, E336, D345, and A347 each contribute to the [CaMn4O5] cluster site. Residues 348 to 360 constitute a propeptide that is removed on maturation; that stretch reads CANCLLSLWPMVG.

Belongs to the reaction center PufL/M/PsbA/D family. In terms of assembly, PSII is composed of 1 copy each of membrane proteins PsbA, PsbB, PsbC, PsbD, PsbE, PsbF, PsbH, PsbI, PsbJ, PsbK, PsbL, PsbM, PsbT, PsbX, PsbY, PsbZ, Psb30/Ycf12, at least 3 peripheral proteins of the oxygen-evolving complex and a large number of cofactors. It forms dimeric complexes. The D1/D2 heterodimer binds P680, chlorophylls that are the primary electron donor of PSII, and subsequent electron acceptors. It shares a non-heme iron and each subunit binds pheophytin, quinone, additional chlorophylls, carotenoids and lipids. D1 provides most of the ligands for the Mn4-Ca-O5 cluster of the oxygen-evolving complex (OEC). There is also a Cl(-1) ion associated with D1 and D2, which is required for oxygen evolution. The PSII complex binds additional chlorophylls, carotenoids and specific lipids. is required as a cofactor. Post-translationally, tyr-164 forms a radical intermediate that is referred to as redox-active TyrZ, YZ or Y-Z. In terms of processing, C-terminally processed by CtpA; processing is essential to allow assembly of the oxygen-evolving complex and thus photosynthetic growth.

The protein resides in the plastid. Its subcellular location is the chloroplast thylakoid membrane. The enzyme catalyses 2 a plastoquinone + 4 hnu + 2 H2O = 2 a plastoquinol + O2. Photosystem II (PSII) is a light-driven water:plastoquinone oxidoreductase that uses light energy to abstract electrons from H(2)O, generating O(2) and a proton gradient subsequently used for ATP formation. It consists of a core antenna complex that captures photons, and an electron transfer chain that converts photonic excitation into a charge separation. The D1/D2 (PsbA/PsbD) reaction center heterodimer binds P680, the primary electron donor of PSII as well as several subsequent electron acceptors. The polypeptide is Photosystem II protein D1 (Karenia mikimotoi (Red tide dinoflagellate)).